A 320-amino-acid polypeptide reads, in one-letter code: Polyketide transferase FFUJ_12241 (320 aa).

The segment at R58–W298 is abhydrolase domain.

This sequence belongs to the polyketide transferase af380 family.

Polyketide transferase; part of the gene cluster that mediates the biosynthesis of fujikurins A-D, secondary metabolites playing a role during rice infection. The polyketide synthase PKS19 acts with the trans-enoyl reductase FFUJ_12240 and the polyketide transferase FFUJ_12241 to produce fujikurins, however, the biosynthesis pathway has not been identified yet. The chain is Polyketide transferase FFUJ_12241 from Gibberella fujikuroi (strain CBS 195.34 / IMI 58289 / NRRL A-6831) (Bakanae and foot rot disease fungus).